A 1451-amino-acid polypeptide reads, in one-letter code: Dual 3',5'-cyclic-AMP and -GMP phosphodiesterase 11 (1451 aa).

5 disordered regions span residues methionine 1–glutamine 54, alanine 75–glycine 100, leucine 125–glutamine 169, glycine 235–threonine 262, and glutamine 327–glycine 374. A compositionally biased stretch (basic residues) spans arginine 11–serine 21. The segment covering glutamine 24–glutamine 45 has biased composition (low complexity). Over residues threonine 77–glutamine 91 the composition is skewed to polar residues. Low complexity-rich tracts occupy residues serine 135–serine 147 and glutamine 160–glutamine 169. Positions glycine 235–asparagine 248 are enriched in polar residues. Basic residues predominate over residues glutamine 327–histidine 340. Low complexity predominate over residues serine 341–glycine 355. Over residues serine 356–glycine 374 the composition is skewed to gly residues. GAF domains are found at residues glutamate 419 to leucine 572 and threonine 604 to isoleucine 754. Residues alanine 783–valine 1107 form the PDEase domain. Histidine 860 (proton donor) is an active-site residue. Residues histidine 864, histidine 900, aspartate 901, and aspartate 1011 each contribute to the a divalent metal cation site. 4 disordered regions span residues threonine 1109 to asparagine 1171, aspartate 1200 to serine 1248, glutamine 1268 to aspartate 1305, and isoleucine 1325 to alanine 1364. Composition is skewed to low complexity over residues alanine 1142 to asparagine 1171 and cysteine 1218 to serine 1234. The segment covering glutamine 1268–lysine 1277 has biased composition (polar residues). The segment covering histidine 1328 to serine 1355 has biased composition (basic residues).

The protein belongs to the cyclic nucleotide phosphodiesterase family. Requires a divalent metal cation as cofactor. In adults, it is enriched in Malpighian tubules.

The enzyme catalyses 3',5'-cyclic GMP + H2O = GMP + H(+). The catalysed reaction is 3',5'-cyclic AMP + H2O = AMP + H(+). Plays a role in signal transduction by regulating the intracellular concentration of cyclic nucleotides cAMP and cGMP. Dual-specificity phosphodiesterase that catalyzes the hydrolysis of both cAMP and cGMP to 5'-AMP and 5'-GMP, respectively. In Drosophila melanogaster (Fruit fly), this protein is Dual 3',5'-cyclic-AMP and -GMP phosphodiesterase 11 (Pde11).